A 194-amino-acid chain; its full sequence is Holliday junction branch migration complex subunit RuvA (194 aa).

Residues 1–64 form a domain I region; it reads MISRLTGKLV…EDAHLLFGFA (64 aa). The domain II stretch occupies residues 65 to 143; sequence TAEERKTFRQ…AHAVTDGLFA (79 aa). Positions 144–147 are flexible linker; that stretch reads AAPA. The domain III stretch occupies residues 147-194; it reads AADETEDIVGTLLALGYSEREAKAAVKGVPEGTDVGEGVRLALKNLLK.

Belongs to the RuvA family. In terms of assembly, homotetramer. Forms an RuvA(8)-RuvB(12)-Holliday junction (HJ) complex. HJ DNA is sandwiched between 2 RuvA tetramers; dsDNA enters through RuvA and exits via RuvB. An RuvB hexamer assembles on each DNA strand where it exits the tetramer. Each RuvB hexamer is contacted by two RuvA subunits (via domain III) on 2 adjacent RuvB subunits; this complex drives branch migration. In the full resolvosome a probable DNA-RuvA(4)-RuvB(12)-RuvC(2) complex forms which resolves the HJ.

It localises to the cytoplasm. In terms of biological role, the RuvA-RuvB-RuvC complex processes Holliday junction (HJ) DNA during genetic recombination and DNA repair, while the RuvA-RuvB complex plays an important role in the rescue of blocked DNA replication forks via replication fork reversal (RFR). RuvA specifically binds to HJ cruciform DNA, conferring on it an open structure. The RuvB hexamer acts as an ATP-dependent pump, pulling dsDNA into and through the RuvAB complex. HJ branch migration allows RuvC to scan DNA until it finds its consensus sequence, where it cleaves and resolves the cruciform DNA. The polypeptide is Holliday junction branch migration complex subunit RuvA (Neisseria meningitidis serogroup A / serotype 4A (strain DSM 15465 / Z2491)).